The following is a 404-amino-acid chain: LL-diaminopimelate aminotransferase (404 aa).

Tyrosine 15 and glycine 42 together coordinate substrate. Residues tyrosine 72, 108–109 (AK), tyrosine 132, asparagine 188, tyrosine 219, and 247–249 (SFS) contribute to the pyridoxal 5'-phosphate site. Lysine 109, tyrosine 132, and asparagine 188 together coordinate substrate. At lysine 250 the chain carries N6-(pyridoxal phosphate)lysine. 2 residues coordinate pyridoxal 5'-phosphate: arginine 258 and asparagine 288. Asparagine 288 and arginine 384 together coordinate substrate.

Belongs to the class-I pyridoxal-phosphate-dependent aminotransferase family. LL-diaminopimelate aminotransferase subfamily. As to quaternary structure, homodimer. Pyridoxal 5'-phosphate is required as a cofactor.

The catalysed reaction is (2S,6S)-2,6-diaminopimelate + 2-oxoglutarate = (S)-2,3,4,5-tetrahydrodipicolinate + L-glutamate + H2O + H(+). Its pathway is amino-acid biosynthesis; L-lysine biosynthesis via DAP pathway; LL-2,6-diaminopimelate from (S)-tetrahydrodipicolinate (aminotransferase route): step 1/1. Functionally, involved in the synthesis of meso-diaminopimelate (m-DAP or DL-DAP), required for both lysine and peptidoglycan biosynthesis. Catalyzes the direct conversion of tetrahydrodipicolinate to LL-diaminopimelate. The polypeptide is LL-diaminopimelate aminotransferase (Agathobacter rectalis (strain ATCC 33656 / DSM 3377 / JCM 17463 / KCTC 5835 / VPI 0990) (Eubacterium rectale)).